The chain runs to 690 residues: Dual specificity protein kinase lkh1 (690 aa).

The disordered stretch occupies residues 39-70; the sequence is PNLPPPFSVHQLQSFVPPQPPSSSSPSTTGTV. Positions 362–682 constitute a Protein kinase domain; that stretch reads YTVVRLLGHG…AKEALWHPFF (321 aa). ATP is bound by residues 368 to 376 and lysine 391; that span reads LGHGTFGKV. Catalysis depends on aspartate 488, which acts as the Proton acceptor.

Belongs to the protein kinase superfamily. CMGC Ser/Thr protein kinase family. Lammer subfamily. Post-translationally, autophosphorylates on all three types of residues.

The enzyme catalyses L-seryl-[protein] + ATP = O-phospho-L-seryl-[protein] + ADP + H(+). The catalysed reaction is L-threonyl-[protein] + ATP = O-phospho-L-threonyl-[protein] + ADP + H(+). It carries out the reaction L-tyrosyl-[protein] + ATP = O-phospho-L-tyrosyl-[protein] + ADP + H(+). Protein kinase that may act as a negative regulator of filamentous growth and flocculation. Appears to have a role in normal cell wall and septum formation and in cell separation. May have antagonistic function in the regulation of beta-glucan distribution between the sites for cell wall and septum assembly. This chain is Dual specificity protein kinase lkh1 (lkh1), found in Schizosaccharomyces pombe (strain 972 / ATCC 24843) (Fission yeast).